Reading from the N-terminus, the 341-residue chain is tRNA N6-adenosine threonylcarbamoyltransferase (341 aa).

Residues His-111 and His-115 each coordinate Fe cation. Residues 134–138 (LVSGG), Asp-167, Gly-180, and Asn-276 each bind substrate. A Fe cation-binding site is contributed by Asp-304.

Belongs to the KAE1 / TsaD family. Fe(2+) serves as cofactor.

It localises to the cytoplasm. The catalysed reaction is L-threonylcarbamoyladenylate + adenosine(37) in tRNA = N(6)-L-threonylcarbamoyladenosine(37) in tRNA + AMP + H(+). Its function is as follows. Required for the formation of a threonylcarbamoyl group on adenosine at position 37 (t(6)A37) in tRNAs that read codons beginning with adenine. Is involved in the transfer of the threonylcarbamoyl moiety of threonylcarbamoyl-AMP (TC-AMP) to the N6 group of A37, together with TsaE and TsaB. TsaD likely plays a direct catalytic role in this reaction. In Pseudomonas putida (strain ATCC 47054 / DSM 6125 / CFBP 8728 / NCIMB 11950 / KT2440), this protein is tRNA N6-adenosine threonylcarbamoyltransferase.